Here is a 281-residue protein sequence, read N- to C-terminus: Endochitinase B (281 aa).

Residues 1-33 (MAMAKAGAPRVSAAQLVTLGLSLLCAVAGPAAA) form the signal peptide. The region spanning 34-68 (QNCGCQPNVCCSKFGYCGTTDEYCGDGCQSGPCRS) is the Chitin-binding type-1 domain. Intrachain disulfides connect C36–C44, C38–C50, C43–C57, and C61–C66. A hinge region (Gly-rich) region spans residues 69–78 (GGGGSSGGGG). Residues 79-281 (ANVASVVTGS…GVDPGPNLTC (203 aa)) are catalytic. A disulfide bridge links C101 with C150. The Proton donor role is filled by E145. A glycan (N-linked (GlcNAc...) asparagine) is linked at N156. 2 disulfides stabilise this stretch: C162–C171 and C249–C281. N-linked (GlcNAc...) asparagine glycosylation is present at N278.

It belongs to the glycosyl hydrolase 19 family. Chitinase class I subfamily.

The protein localises to the secreted. It carries out the reaction Random endo-hydrolysis of N-acetyl-beta-D-glucosaminide (1-&gt;4)-beta-linkages in chitin and chitodextrins.. Functionally, defense against chitin-containing fungal pathogens. Its action is countered by fungal polyglycine hydrolases, that cleaves within its hinge region (Gly-rich) to disrupt chitin-binding. This Zea mays (Maize) protein is Endochitinase B.